The chain runs to 260 residues: Acetylglutamate kinase (260 aa).

Substrate contacts are provided by residues 46–47 (GG), arginine 68, and asparagine 160.

It belongs to the acetylglutamate kinase family. ArgB subfamily.

The protein localises to the cytoplasm. It carries out the reaction N-acetyl-L-glutamate + ATP = N-acetyl-L-glutamyl 5-phosphate + ADP. It functions in the pathway amino-acid biosynthesis; L-arginine biosynthesis; N(2)-acetyl-L-ornithine from L-glutamate: step 2/4. Its function is as follows. Catalyzes the ATP-dependent phosphorylation of N-acetyl-L-glutamate. This is Acetylglutamate kinase from Shewanella sp. (strain MR-4).